Reading from the N-terminus, the 214-residue chain is Cell division protein SepF (214 aa).

The segment at Y23 to Y70 is disordered. Residues P36 to A58 show a composition bias toward basic and acidic residues.

It belongs to the SepF family. In terms of assembly, homodimer. Interacts with FtsZ.

Its subcellular location is the cytoplasm. Functionally, cell division protein that is part of the divisome complex and is recruited early to the Z-ring. Probably stimulates Z-ring formation, perhaps through the cross-linking of FtsZ protofilaments. Its function overlaps with FtsA. The protein is Cell division protein SepF of Mycobacterium avium (strain 104).